The following is a 330-amino-acid chain: LIM domain-containing protein pin-2 (330 aa).

5 LIM zinc-binding domains span residues 21 to 73 (CERC…CEHD), 82 to 132 (CAKC…CFLC), 144 to 194 (CNKC…CPRC), 202 to 255 (CFDC…CRDD), and 264 to 315 (CFIC…CKKC).

Expressed in neurons and intestine.

Its subcellular location is the cytoplasm. The protein resides in the nucleus. In Caenorhabditis elegans, this protein is LIM domain-containing protein pin-2 (pin-2).